The chain runs to 146 residues: Hemoglobin subunit beta-1 (146 aa).

One can recognise a Globin domain in the interval 2 to 146 (EWTDQERATI…VVSALGKQYH (145 aa)). Heme b-binding residues include His-63 and His-92.

The protein belongs to the globin family. Hb1 is a heterotetramer of two alpha-1 chains and two beta-1 chains. Hb2 is a heterotetramer of two alpha-2 chains and two beta-1 chains. HbC is a heterotetramer of two alpha-1 chains and two beta-2 chains. Red blood cells.

Functionally, involved in oxygen transport from gills to the various peripheral tissues. The polypeptide is Hemoglobin subunit beta-1 (Eleginops maclovinus (Patagonian blennie)).